The following is a 586-amino-acid chain: MRKTKIVCTIGPASESEEMLEKLMKAGMNVARLNFSHGSHEEHKARIDTIRKVADRLGKTIGILLDTKGPEIRTHDMKDGLIMLEKGKEVIVSMSQVEGTPEKFSVTYEDLINDVQVGSYILLDDGLVELQVKDIDKTKGEVKCDILNTGELKNKKGVNLPGVKVNLPGITDKDADDILFGIKEDVDYIAASFVRRPSDVLDIREILERENNHNITIFPKIENQEGIDNIEEILEVSDGLMVARGDMGVEIPPESVPIVQKDLIRKCNKLGKPVITATQMLDSMQRNPRATRAEASDVANAIYDGTDAVMLSGETAAGLYPEEAVKTMRNIAVSAEAAQDYKKLLSDRTKLVETSLVNAIGVSVAHTALNLNVKAIVAATESGSTAVTISKYRPHSDIIAVTPSEHTARQLALVWGAYPVIKKGRKTTDDLLNNAVATAVETGRVTNGDLIIITAGVPTGEKGTTNMMKLHLVGDEIAKGQGVGRGSVVGKTVVANSASDLEGVDLSESVIVTNSVDETLVPYIEQAVGLITEENGITSPSAIIGLEKSIPTIIGVENATKELKDGILVTVDAAQGKIFEGYANVL.

R32 contacts substrate. K(+)-binding residues include N34, S36, D66, and T67. Residue 34–37 (NFSH) coordinates ATP. Positions 73 and 156 each coordinate ATP. E222 is a binding site for Mg(2+). G245, D246, and T278 together coordinate substrate. D246 is a binding site for Mg(2+).

The protein belongs to the pyruvate kinase family. It in the C-terminal section; belongs to the PEP-utilizing enzyme family. Mg(2+) is required as a cofactor. Requires K(+) as cofactor.

It carries out the reaction pyruvate + ATP = phosphoenolpyruvate + ADP + H(+). Its pathway is carbohydrate degradation; glycolysis; pyruvate from D-glyceraldehyde 3-phosphate: step 5/5. The chain is Pyruvate kinase (pyk) from Staphylococcus haemolyticus (strain JCSC1435).